The chain runs to 23 residues: GHACYRNCWREGNDEETCKERCG.

Cystine bridges form between Cys4–Cys22 and Cys8–Cys18. A Cysteine amide modification is found at Cys22.

This sequence belongs to the short scorpion toxin superfamily. Potassium channel inhibitor kappa-KTx family. Kappa-KTx 1 subfamily. In terms of processing, the two disulfide isomers globular (C1-C3, C2-C4) and beads (C1-C2, C3-C4) do not show activity on Kv10.1/KCNH1/EAG1. In terms of tissue distribution, expressed by the venom gland.

It localises to the secreted. Shows weak blocking activity on voltage-gated potassium channels Kv10.1/KCNH1/EAG1 (IC(50)=26 uM), Kv1.2/KCNA2 (Kd=150 uM), Kv1.3/KCNA3 (Kd=40 uM), Kv1.6/KCNA3 (16.6% inhibition at 40 uM toxin). The block is dose-dependent, voltage-independent, and reversible. Also shows a weak inhibitory activity on the plant pathogen F.culmorum growth (IC(50)=18.8-37.7 uM). This Chersonesometrus fulvipes (Indian black scorpion) protein is Potassium channel toxin kappa-KTx 1.2.